The chain runs to 695 residues: Testis-specific Y-encoded-like protein 2 (695 aa).

The tract at residues 1–56 (MDRPDEGPPAKTRRLSSSESPQRDPPPPPPPPPLLRLPLPPPQQRPRLQEETEAAQ) is disordered. A Glycyl lysine isopeptide (Lys-Gly) (interchain with G-Cter in SUMO2) cross-link involves residue lysine 11. Phosphoserine is present on residues serine 18 and serine 20. Residues 23–44 (RDPPPPPPPPPLLRLPLPPPQQ) show a composition bias toward pro residues. Residues lysine 163 and lysine 165 each participate in a glycyl lysine isopeptide (Lys-Gly) (interchain with G-Cter in SUMO2) cross-link. The disordered stretch occupies residues 175–207 (EDEDEQESMRSSRRRRRRRRRKQRKVKRESRQR). Basic residues predominate over residues 185–202 (SSRRRRRRRRRKQRKVKR). Phosphothreonine is present on threonine 340. 2 disordered regions span residues 471–603 (DINE…RDIE) and 632–695 (VEEE…GKTG). Residues 481–491 (SPDHDEVRNET) are compositionally biased toward basic and acidic residues. The span at 496 to 518 (ESADDNETTDNNESADDNNENPE) shows a compositional bias: acidic residues. Residues 519–535 (DNNKNADDNKENPDNNK) are compositionally biased toward basic and acidic residues. A compositionally biased stretch (low complexity) spans 539–557 (GNNFFNGGFWGSHGNNQDS). 2 stretches are compositionally biased toward acidic residues: residues 558 to 601 (SDSD…DDRD) and 632 to 677 (VEEE…DLED). Phosphoserine is present on residues serine 670 and serine 673.

This sequence belongs to the nucleosome assembly protein (NAP) family. Interacts with histones. Interacts with CASK. Part of a complex containing CASK, TBR1 and TSPYL2. In terms of processing, phosphorylation at Ser-20 and/or Thr-340 impairs function on cell proliferation. As to expression, ubiquitously expressed, with highest levels in testis, adrenal gland, cerebral cortex, ovary, skeletal muscle and spleen. Present in testis, adrenal gland, cerebral cortex and ovary (at protein level).

The protein resides in the nucleus. The protein localises to the cytoplasm. In terms of biological role, part of the CASK/TBR1/TSPYL2 transcriptional complex which modulates gene expression in response to neuronal synaptic activity, probably by facilitating nucleosome assembly. May inhibit cell proliferation by inducing p53-dependent CDKN1A expression. This is Testis-specific Y-encoded-like protein 2 (TSPYL2) from Macaca fascicularis (Crab-eating macaque).